A 274-amino-acid polypeptide reads, in one-letter code: MGQKINPHGFRLGITTDWKSRWYADKQYAEYVKEDVAIRRLLSSGLERAGIADVEIERTRDRVRVDIHTARPGIVIGRRGTEADRIRADLEKLTGKQVQLNILEVKNPESQAQLVAQGVAEQLSNRVAFRRAMRKAIQSAMRQPNVKGIRVQCSGRLGGAEMSRSEFYREGRVPLHTLRADIDYGLYEAKTTFGRIGVKVWIYKGDIVGGKRELAAAAPAGADRPRRERPSGTRPRRSGASGTTATGTDAGRAAGGEEAAPDAAAPVEAQSTES.

The 69-residue stretch at I38–K106 folds into the KH type-2 domain. The disordered stretch occupies residues A215 to S274. Low complexity predominate over residues S238–P266.

Belongs to the universal ribosomal protein uS3 family. Part of the 30S ribosomal subunit. Forms a tight complex with proteins S10 and S14.

Its function is as follows. Binds the lower part of the 30S subunit head. Binds mRNA in the 70S ribosome, positioning it for translation. In Mycobacterium tuberculosis (strain ATCC 25177 / H37Ra), this protein is Small ribosomal subunit protein uS3.